The sequence spans 247 residues: Chromosome partition protein MukE (247 aa).

Residues 213-247 (AQSLQEEKNGLKDNMDQSAVENEQYFENEENEGIA) form a disordered region. Basic and acidic residues predominate over residues 217-227 (QEEKNGLKDNM). Over residues 236–247 (QYFENEENEGIA) the composition is skewed to acidic residues.

It belongs to the MukE family. In terms of assembly, interacts, and probably forms a ternary complex, with MukF and MukB. The complex formation is stimulated by calcium or magnesium.

It localises to the cytoplasm. The protein resides in the nucleoid. In terms of biological role, involved in chromosome condensation, segregation and cell cycle progression. May participate in facilitating chromosome segregation by condensation DNA from both sides of a centrally located replisome during cell division. Probably acts via its interaction with MukB and MukF. The protein is Chromosome partition protein MukE of Histophilus somni (strain 2336) (Haemophilus somnus).